Here is a 665-residue protein sequence, read N- to C-terminus: Fructose-1,6-bisphosphatase class 3 (665 aa).

It belongs to the FBPase class 3 family. The cofactor is Mn(2+).

The catalysed reaction is beta-D-fructose 1,6-bisphosphate + H2O = beta-D-fructose 6-phosphate + phosphate. The protein operates within carbohydrate biosynthesis; gluconeogenesis. In Clostridium acetobutylicum (strain ATCC 824 / DSM 792 / JCM 1419 / IAM 19013 / LMG 5710 / NBRC 13948 / NRRL B-527 / VKM B-1787 / 2291 / W), this protein is Fructose-1,6-bisphosphatase class 3.